A 455-amino-acid polypeptide reads, in one-letter code: Protein U54 (455 aa).

The protein belongs to the herpesviridae UL82 family.

The chain is Protein U54 (U54) from Homo sapiens (Human).